Consider the following 152-residue polypeptide: Probable spermine N(1)-acetyltransferase (152 aa).

One can recognise an N-acetyltransferase domain in the interval 3–152 (INIKAVTDDN…NGEKVMVKEL (150 aa)). Acetyl-CoA is bound by residues 82 to 84 (FFI), 89 to 95 (QGKGLGK), and 122 to 131 (NIHAIRLYQR). Tyr129 functions as the Proton donor in the catalytic mechanism.

It belongs to the acetyltransferase family.

The enzyme catalyses an alkane-alpha,omega-diamine + acetyl-CoA = an N-acetylalkane-alpha,omega-diamine + CoA + H(+). The catalysed reaction is spermine + acetyl-CoA = N(1)-acetylspermine + CoA + H(+). The protein operates within amine and polyamine degradation; spermine degradation. Functionally, probably acetylates spermine to N(1)-acetylspermine. The sequence is that of Probable spermine N(1)-acetyltransferase from Bacillus subtilis subsp. natto (strain BEST195).